Consider the following 166-residue polypeptide: MRVLGIDPGIALTGYGIIESKNGSEFKVIDYGRIETSSSLKKSMRLLHLYTELCSIISLYQPDVVAIEELFFSKNSKTAITIGEARGVIILTCIQNNLSIYEYTPLQVKQSITGYGRADKTQIQKMVKSLLGLSEIPKPDDVADALAVAMCHILSSSSVLYQEDEV.

Catalysis depends on residues Asp-7, Glu-68, and Asp-141. Mg(2+) is bound by residues Asp-7, Glu-68, and Asp-141.

The protein belongs to the RuvC family. Homodimer which binds Holliday junction (HJ) DNA. The HJ becomes 2-fold symmetrical on binding to RuvC with unstacked arms; it has a different conformation from HJ DNA in complex with RuvA. In the full resolvosome a probable DNA-RuvA(4)-RuvB(12)-RuvC(2) complex forms which resolves the HJ. The cofactor is Mg(2+).

It is found in the cytoplasm. It catalyses the reaction Endonucleolytic cleavage at a junction such as a reciprocal single-stranded crossover between two homologous DNA duplexes (Holliday junction).. Its function is as follows. The RuvA-RuvB-RuvC complex processes Holliday junction (HJ) DNA during genetic recombination and DNA repair. Endonuclease that resolves HJ intermediates. Cleaves cruciform DNA by making single-stranded nicks across the HJ at symmetrical positions within the homologous arms, yielding a 5'-phosphate and a 3'-hydroxyl group; requires a central core of homology in the junction. The consensus cleavage sequence is 5'-(A/T)TT(C/G)-3'. Cleavage occurs on the 3'-side of the TT dinucleotide at the point of strand exchange. HJ branch migration catalyzed by RuvA-RuvB allows RuvC to scan DNA until it finds its consensus sequence, where it cleaves and resolves the cruciform DNA. The polypeptide is Crossover junction endodeoxyribonuclease RuvC (Caldicellulosiruptor saccharolyticus (strain ATCC 43494 / DSM 8903 / Tp8T 6331)).